The chain runs to 430 residues: Meiotically up-regulated gene 132 protein (430 aa).

This sequence belongs to the UPF0300 family.

It localises to the mitochondrion. In terms of biological role, has a role in meiosis. This Schizosaccharomyces pombe (strain 972 / ATCC 24843) (Fission yeast) protein is Meiotically up-regulated gene 132 protein (mug132).